A 354-amino-acid chain; its full sequence is Replication factor C subunit 3 (354 aa).

ATP is bound at residue 41–48; it reads GPSGSGKK.

Belongs to the activator 1 small subunits family. Heterotetramer of subunits RFC2, RFC3, RFC4 and RFC5 that can form a complex with RFC1.

It localises to the nucleus. Its function is as follows. May be involved in DNA replication and thus regulate cell proliferation. The protein is Replication factor C subunit 3 (RFC3) of Arabidopsis thaliana (Mouse-ear cress).